A 231-amino-acid polypeptide reads, in one-letter code: Chromosome partition protein MukE (231 aa).

The segment at 195–231 is disordered; the sequence is MIRDGEAMPVEGSLSLKDDSDDNDRTDDTAPETGEDE. Positions 213 to 231 are enriched in acidic residues; that stretch reads DSDDNDRTDDTAPETGEDE.

This sequence belongs to the MukE family. Interacts, and probably forms a ternary complex, with MukF and MukB. The complex formation is stimulated by calcium or magnesium.

The protein resides in the cytoplasm. It localises to the nucleoid. In terms of biological role, involved in chromosome condensation, segregation and cell cycle progression. May participate in facilitating chromosome segregation by condensation DNA from both sides of a centrally located replisome during cell division. Probably acts via its interaction with MukB and MukF. The polypeptide is Chromosome partition protein MukE (Pectobacterium atrosepticum (strain SCRI 1043 / ATCC BAA-672) (Erwinia carotovora subsp. atroseptica)).